A 353-amino-acid chain; its full sequence is Photosystem II D2 protein (353 aa).

Threonine 2 carries the N-acetylthreonine modification. Position 2 is a phosphothreonine (threonine 2). The helical transmembrane segment at 41–61 (CAYFAVGGWFTGTTFVTSWYT) threads the bilayer. Histidine 118 is a chlorophyll a binding site. The helical transmembrane segment at 125-141 (GFMLRQFELARSVQLRP) threads the bilayer. The pheophytin a site is built by glutamine 130 and asparagine 143. The chain crosses the membrane as a helical span at residues 153–166 (VFVSVFLIYPLGQS). Histidine 198 lines the chlorophyll a pocket. Residues 208–228 (AALLCAIHGATVENTLFEDGD) traverse the membrane as a helical segment. 2 residues coordinate a plastoquinone: histidine 215 and phenylalanine 262. Histidine 215 provides a ligand contact to Fe cation. Histidine 269 provides a ligand contact to Fe cation. A helical transmembrane segment spans residues 279-295 (GLWMSALGVVGLALNLR).

It belongs to the reaction center PufL/M/PsbA/D family. PSII is composed of 1 copy each of membrane proteins PsbA, PsbB, PsbC, PsbD, PsbE, PsbF, PsbH, PsbI, PsbJ, PsbK, PsbL, PsbM, PsbT, PsbX, PsbY, PsbZ, Psb30/Ycf12, at least 3 peripheral proteins of the oxygen-evolving complex and a large number of cofactors. It forms dimeric complexes. It depends on The D1/D2 heterodimer binds P680, chlorophylls that are the primary electron donor of PSII, and subsequent electron acceptors. It shares a non-heme iron and each subunit binds pheophytin, quinone, additional chlorophylls, carotenoids and lipids. There is also a Cl(-1) ion associated with D1 and D2, which is required for oxygen evolution. The PSII complex binds additional chlorophylls, carotenoids and specific lipids. as a cofactor.

The protein localises to the plastid. It is found in the chloroplast thylakoid membrane. It carries out the reaction 2 a plastoquinone + 4 hnu + 2 H2O = 2 a plastoquinol + O2. Photosystem II (PSII) is a light-driven water:plastoquinone oxidoreductase that uses light energy to abstract electrons from H(2)O, generating O(2) and a proton gradient subsequently used for ATP formation. It consists of a core antenna complex that captures photons, and an electron transfer chain that converts photonic excitation into a charge separation. The D1/D2 (PsbA/PsbD) reaction center heterodimer binds P680, the primary electron donor of PSII as well as several subsequent electron acceptors. D2 is needed for assembly of a stable PSII complex. The polypeptide is Photosystem II D2 protein (Cucumis sativus (Cucumber)).